The primary structure comprises 158 residues: GTP-dependent dephospho-CoA kinase (158 aa).

Positions 35, 36, 54, 56, 109, and 132 each coordinate GTP.

The protein belongs to the GTP-dependent DPCK family.

The catalysed reaction is 3'-dephospho-CoA + GTP = GDP + CoA + H(+). The protein operates within cofactor biosynthesis; coenzyme A biosynthesis. Its function is as follows. Catalyzes the GTP-dependent phosphorylation of the 3'-hydroxyl group of dephosphocoenzyme A to form coenzyme A (CoA). This chain is GTP-dependent dephospho-CoA kinase, found in Methanococcus maripaludis (strain C5 / ATCC BAA-1333).